We begin with the raw amino-acid sequence, 435 residues long: Cytochrome c biogenesis protein CcsB (435 aa).

A run of 3 helical transmembrane segments spans residues 11 to 31 (LRVAIFLLLIIALSSSLGTAL), 69 to 89 (SDWFLSLLLWLGIALVFCSWR), and 159 to 179 (VGPLMVHTGLVILMLGAVWGV).

This sequence belongs to the Ccs1/CcsB family. As to quaternary structure, may interact with CcsA.

The protein localises to the plastid. It localises to the organellar chromatophore thylakoid membrane. In terms of biological role, required during biogenesis of c-type cytochromes (cytochrome c6 and cytochrome f) at the step of heme attachment. This is Cytochrome c biogenesis protein CcsB from Paulinella chromatophora.